The chain runs to 548 residues: Zinc metalloproteinase (548 aa).

The first 28 residues, 1 to 28 (MKKYYAVTGIALAVGMLCTTQLAGATQA), serve as a signal peptide directing secretion. H362 contributes to the Zn(2+) binding site. The active site involves E363. Zn(2+) contacts are provided by H366 and E386. The segment at 440–459 (SNWKPTATNPNDNNDQGGVH) is disordered. Polar residues predominate over residues 442-459 (WKPTATNPNDNNDQGGVH). H459 serves as the catalytic Proton donor.

Belongs to the peptidase M4 family. The cofactor is Ca(2+). Zn(2+) is required as a cofactor.

Its subcellular location is the secreted. It localises to the cell wall. Its function is as follows. Zinc metalloprotease with hemolytic properties. This is Zinc metalloproteinase (hly) from Renibacterium salmoninarum.